The following is a 370-amino-acid chain: Peptide chain release factor 1 (370 aa).

Q231 bears the N5-methylglutamine mark. Residues 284–293 (AREERERETR) are compositionally biased toward basic and acidic residues. The disordered stretch occupies residues 284–303 (AREERERETRAAQVGTGERS).

This sequence belongs to the prokaryotic/mitochondrial release factor family. In terms of processing, methylated by PrmC. Methylation increases the termination efficiency of RF1.

The protein localises to the cytoplasm. Peptide chain release factor 1 directs the termination of translation in response to the peptide chain termination codons UAG and UAA. This Deinococcus geothermalis (strain DSM 11300 / CIP 105573 / AG-3a) protein is Peptide chain release factor 1.